Consider the following 235-residue polypeptide: Cytidylate kinase (235 aa).

16 to 24 is a binding site for ATP; that stretch reads GPAASGKST.

This sequence belongs to the cytidylate kinase family. Type 1 subfamily.

Its subcellular location is the cytoplasm. It catalyses the reaction CMP + ATP = CDP + ADP. The catalysed reaction is dCMP + ATP = dCDP + ADP. The protein is Cytidylate kinase of Chloroherpeton thalassium (strain ATCC 35110 / GB-78).